Reading from the N-terminus, the 416-residue chain is CinA-like protein (416 aa).

The protein belongs to the CinA family.

The polypeptide is CinA-like protein (Trichormus variabilis (strain ATCC 29413 / PCC 7937) (Anabaena variabilis)).